The chain runs to 217 residues: Small ribosomal subunit protein uS3 (217 aa).

One can recognise a KH type-2 domain in the interval 38–106 (IRKYIDNALQ…KVHINVIEIK (69 aa)).

Belongs to the universal ribosomal protein uS3 family. In terms of assembly, part of the 30S ribosomal subunit. Forms a tight complex with proteins S10 and S14.

In terms of biological role, binds the lower part of the 30S subunit head. Binds mRNA in the 70S ribosome, positioning it for translation. This Staphylococcus saprophyticus subsp. saprophyticus (strain ATCC 15305 / DSM 20229 / NCIMB 8711 / NCTC 7292 / S-41) protein is Small ribosomal subunit protein uS3.